Consider the following 687-residue polypeptide: Methionine--tRNA ligase (687 aa).

The 'HIGH' region signature appears at 14–24; the sequence is PYANGYIHLGH. 4 residues coordinate Zn(2+): Cys-145, Cys-148, Cys-158, and Cys-161. The 'KMSKS' region signature appears at 329 to 333; sequence KMSKS. Lys-332 serves as a coordination point for ATP. In terms of domain architecture, tRNA-binding spans 585–687; that stretch reads DFDKVDLRIG…DGAQVGQRVK (103 aa).

Belongs to the class-I aminoacyl-tRNA synthetase family. MetG type 1 subfamily. In terms of assembly, homodimer. Zn(2+) serves as cofactor.

The protein localises to the cytoplasm. The catalysed reaction is tRNA(Met) + L-methionine + ATP = L-methionyl-tRNA(Met) + AMP + diphosphate. Functionally, is required not only for elongation of protein synthesis but also for the initiation of all mRNA translation through initiator tRNA(fMet) aminoacylation. The sequence is that of Methionine--tRNA ligase from Bdellovibrio bacteriovorus (strain ATCC 15356 / DSM 50701 / NCIMB 9529 / HD100).